A 513-amino-acid polypeptide reads, in one-letter code: V-type proton ATPase subunit B (513 aa).

Arginine 375 serves as a coordination point for ATP. Residues 484–503 (ADRKGKGKDKPTTKDTRDTA) are compositionally biased toward basic and acidic residues. Residues 484-513 (ADRKGKGKDKPTTKDTRDTAAPEEENLIDA) form a disordered region. Residues 504 to 513 (APEEENLIDA) are compositionally biased toward acidic residues.

It belongs to the ATPase alpha/beta chains family. V-ATPase is a heteromultimeric enzyme composed of a peripheral catalytic V1 complex (components A to H) attached to an integral membrane V0 proton pore complex (components: a, c, c', c'', d, e, f and VOA1).

Its subcellular location is the vacuole membrane. Functionally, non-catalytic subunit of the V1 complex of vacuolar(H+)-ATPase (V-ATPase), a multisubunit enzyme composed of a peripheral complex (V1) that hydrolyzes ATP and a membrane integral complex (V0) that translocates protons. V-ATPase is responsible for acidifying and maintaining the pH of intracellular compartments. This is V-type proton ATPase subunit B from Neurospora crassa (strain ATCC 24698 / 74-OR23-1A / CBS 708.71 / DSM 1257 / FGSC 987).